Here is a 155-residue protein sequence, read N- to C-terminus: MLSPKRTKYRKQQRGRMKGKATRGNRINFGEYGLVALEPAWITARQIEASRRAMTRYVRRGGQIWIRIFPDKPVTQRAAETRMGSGKGNPEYWVCVVKPGRILFEMGGVAEPIAREAMRLAAQKLPIKVKFVTKADFEKPEPAQATASEVATSSV.

The disordered stretch occupies residues 1 to 22 (MLSPKRTKYRKQQRGRMKGKAT).

This sequence belongs to the universal ribosomal protein uL16 family. Part of the 50S ribosomal subunit.

Functionally, binds 23S rRNA and is also seen to make contacts with the A and possibly P site tRNAs. The protein is Large ribosomal subunit protein uL16 of Synechococcus sp. (strain JA-2-3B'a(2-13)) (Cyanobacteria bacterium Yellowstone B-Prime).